The chain runs to 185 residues: MVNEIFEHTKENMDKSLEALKRDFASLRTGKVTTNIVDNIKVDYYGTPTPLNQVGSVIATDATTISITPWEKNLLSDIERAIQEANIGVNPNNDGDFIKLFFPPMTSEQRQEIVKQAKAMAENARVAIRNIRKDANNKIKKLEKDKEISEDESKRAHDEIQKITDDHIGMVDELFKAKEADILKV.

It belongs to the RRF family.

It localises to the cytoplasm. Functionally, responsible for the release of ribosomes from messenger RNA at the termination of protein biosynthesis. May increase the efficiency of translation by recycling ribosomes from one round of translation to another. The polypeptide is Ribosome-recycling factor (Sulfurovum sp. (strain NBC37-1)).